Reading from the N-terminus, the 586-residue chain is Phosphatase and actin regulator 1 (586 aa).

Residues 62 to 83 (RRRSKFATLGRLFKPWKWRKKK) carry the Nuclear localization signal motif. The RPEL 1 repeat unit spans residues 92-117 (AALERKISMRQSREELIKRGVLKEMY). Residues 373-414 (ECEDDKENVPHETSYDDSSCLYSRDEEEDDDDDDDDEDDDSS) form a disordered region. Residues 397–413 (DEEEDDDDDDDDEDDDS) are compositionally biased toward acidic residues. RPEL repeat units lie at residues 428–453 (DSLAIKLSNRPSKRELEEKNILPMQT), 466–491 (TKLTRRLSQRPTAEELEQRNILKPRN), and 504–529 (RRLTRKLSQRPTVEELREKKILISFS).

The protein belongs to the phosphatase and actin regulator family. In terms of assembly, interacts (via RPEL repeats) with ACTA1.

Its subcellular location is the cytoplasm. The protein localises to the synapse. It is found in the nucleus. Its function is as follows. Binds actin monomers (G actin) and plays a role in the reorganization of the actin cytoskeleton and in formation of actin stress fibers. The protein is Phosphatase and actin regulator 1 (phactr1) of Xenopus laevis (African clawed frog).